Consider the following 277-residue polypeptide: Small ribosomal subunit protein uS2 (277 aa).

Residues Leu-247–Asn-277 are disordered. The span at Ser-253–Glu-264 shows a compositional bias: acidic residues. Basic and acidic residues predominate over residues Glu-265–Asn-277.

Belongs to the universal ribosomal protein uS2 family.

This chain is Small ribosomal subunit protein uS2 (rpsB), found in Chlamydia pneumoniae (Chlamydophila pneumoniae).